Reading from the N-terminus, the 364-residue chain is Ribosomal RNA large subunit methyltransferase M (364 aa).

Residues S198, 231-234, D250, D270, and D286 each bind S-adenosyl-L-methionine; that span reads APGG. K315 (proton acceptor) is an active-site residue.

It belongs to the class I-like SAM-binding methyltransferase superfamily. RNA methyltransferase RlmE family. RlmM subfamily. Monomer.

It is found in the cytoplasm. It carries out the reaction cytidine(2498) in 23S rRNA + S-adenosyl-L-methionine = 2'-O-methylcytidine(2498) in 23S rRNA + S-adenosyl-L-homocysteine + H(+). Its function is as follows. Catalyzes the 2'-O-methylation at nucleotide C2498 in 23S rRNA. In Thauera aminoaromatica, this protein is Ribosomal RNA large subunit methyltransferase M.